Reading from the N-terminus, the 391-residue chain is Probable sugar efflux transporter (391 aa).

The next 12 membrane-spanning stretches (helical) occupy residues 16-36 (VFVFSLSAFIFNTTEFVPVAL), 51-71 (VGLMITAYAWVVSLGSLPLML), 82-102 (LLFLFALFIFSHILSALAWNF), 110-130 (MGIAFAHSIFWSITASLVIRV), 138-158 (QALGLLALGSSLAMILGLPLG), 170-190 (TFGVIGGVATLIMLLMWKLLP), 210-230 (PLLVGIYLLVIMVISGHFTTY), 247-267 (ITTLMLFVFGLAGVVGSFLFG), 277-297 (FIAFAMVLVICPQLLLFVFKN), 300-320 (WVIFLQIFLWGIGITSLTIAL), 338-358 (IFSGSYNVGIGSGALFGSIVI), and 361-381 (LGLEYIGFVGGALGLLALFWL).

It belongs to the major facilitator superfamily. SotB (TC 2.A.1.2) family.

Its subcellular location is the cell inner membrane. Functionally, involved in the efflux of sugars. The physiological role may be the reduction of the intracellular concentration of toxic sugars or sugar metabolites. The sequence is that of Probable sugar efflux transporter from Helicobacter pylori (strain J99 / ATCC 700824) (Campylobacter pylori J99).